The sequence spans 431 residues: COBRA-like protein 4 (431 aa).

A signal peptide spans 1-20 (MRLLFSFCFFFFMIIFTATA). Residues asparagine 29, asparagine 154, asparagine 162, asparagine 201, asparagine 226, asparagine 306, asparagine 321, and asparagine 340 are each glycosylated (N-linked (GlcNAc...) asparagine). Asparagine 414 carries GPI-anchor amidated asparagine lipidation. A propeptide spans 415–431 (FASFSLTILLLLFISIW) (removed in mature form).

The protein belongs to the COBRA family. In terms of tissue distribution, expressed in roots, stems, leaves, flowers and siliques.

Its subcellular location is the cell membrane. The protein is COBRA-like protein 4 (COBL4) of Arabidopsis thaliana (Mouse-ear cress).